A 918-amino-acid polypeptide reads, in one-letter code: DNA repair and recombination protein RAD54B (918 aa).

A compositionally biased stretch (polar residues) spans 1–11; the sequence is MRRSAAPSQVL. Residues 1–29 are disordered; the sequence is MRRSAAPSQVLGNVAKKPRFIPPGKSNAL. A Helicase ATP-binding domain is found at 320-487; sequence GMRVSGRFGA…YALIEFVNPG (168 aa). ATP is bound at residue 333 to 340; it reads DEMGLGKT. Residues 438 to 441 carry the DEGH box motif; sequence DEGH. Residues 653-817 form the Helicase C-terminal domain; that stretch reads VLVKLLAAIR…HIHFSVEELR (165 aa). The disordered stretch occupies residues 842–873; that stretch reads KDHQNPSSKKPSVSRCCQLRQDQGKHNSKKPL.

The protein belongs to the SNF2/RAD54 helicase family.

It localises to the nucleus. Functionally, involved in DNA repair and mitotic recombination. This Gallus gallus (Chicken) protein is DNA repair and recombination protein RAD54B (RAD54B).